A 445-amino-acid chain; its full sequence is Acyl-CoA Delta-4 desaturase (445 aa).

The 78-residue stretch at 19–96 folds into the Cytochrome b5 heme-binding domain; the sequence is AGVYTWEEVQ…MKPLLVGELA (78 aa). 4 helical membrane-spanning segments follow: residues 132–152, 153–173, 266–286, and 307–327; these read LFFLLHLGHILLLEALALLMV, WHWGTGWLQTLLCAVMLATAQ, YFFLVAPPLLIPVFYNYNIMM, and YMLCYVPVYGLFGSLALMMFA.

Belongs to the fatty acid desaturase type 1 family.

The protein localises to the membrane. It carries out the reaction (8Z,11Z,14Z,17Z)-eicosatetraenoyl-CoA + 2 Fe(II)-[cytochrome b5] + O2 + 2 H(+) = (5Z,8Z,11Z,14Z,17Z)-eicosapentaenoyl-CoA + 2 Fe(III)-[cytochrome b5] + 2 H2O. It catalyses the reaction (7Z,10Z,13Z,16Z)-docosatetraenoyl-CoA + 2 Fe(II)-[cytochrome b5] + O2 + 2 H(+) = (4Z,7Z,10Z,13Z,16Z)-docosapentaenoyl-CoA + 2 Fe(III)-[cytochrome b5] + 2 H2O. The enzyme catalyses (7Z,10Z,13Z,16Z,19Z)-docosapentaenoyl-CoA + 2 Fe(II)-[cytochrome b5] + O2 + 2 H(+) = (4Z,7Z,10Z,13Z,16Z,19Z)-docosahexaenoyl-CoA + 2 Fe(III)-[cytochrome b5] + 2 H2O. It functions in the pathway lipid metabolism; polyunsaturated fatty acid biosynthesis. Fatty acid desaturase with bifunctional delta-4 and delta-5 activities. Component of a lipid metabolic pathway that catalyzes the biosynthesis of polyunsaturated fatty acids (PUFA) with preference toward n-3 substrates and Delta(4)function. The polypeptide is Acyl-CoA Delta-4 desaturase (Siganus canaliculatus (White-spotted spinefoot)).